A 276-amino-acid polypeptide reads, in one-letter code: NADH-cytochrome b5 reductase 2 (276 aa).

One can recognise an FAD-binding FR-type domain in the interval 15 to 127; it reads EAKYPLPLIE…RGPTGRLFYN (113 aa). At K17 the chain carries N6-acetyllysine. Y18 is modified (phosphotyrosine). FAD-binding positions include 107–137 and 146–181; these read ENMKIGDTILFRGPTGRLFYNEPGTLLIKAN and LVHHLGMIAGGTGITPMLQLIRHITKDTSDETRMSL.

The protein belongs to the flavoprotein pyridine nucleotide cytochrome reductase family. FAD is required as a cofactor.

The enzyme catalyses 2 Fe(III)-[cytochrome b5] + NADH = 2 Fe(II)-[cytochrome b5] + NAD(+) + H(+). Functionally, NADH-cytochrome b5 reductases are involved in desaturation and elongation of fatty acids, cholesterol biosynthesis, drug metabolism, and, in erythrocyte, methemoglobin reduction. Responsible for NADH-dependent lucigenin chemiluminescence in spermatozoa by reducing both lucigenin and 2-[4-iodophenyl]-3-[4-nitrophenyl]-5-[2,4-disulfophenyl]-2H tetrazolium monosodium salt (WST-1). This chain is NADH-cytochrome b5 reductase 2 (Cyb5r2), found in Mus musculus (Mouse).